We begin with the raw amino-acid sequence, 1006 residues long: MIQNGGNSYVDSNMNETQNDTTDNFDAEMQDLNGYISEIVDEARNVSEVDAKFLGDTSALQAEGLWSDEESDYEGSDDESNFSKTASRTEDDIANEEWEENLKAVAGFRKVRKGHKGRGRVSRADMLPSVEVQQMLSLANHLFAQEGNFDEAQKLAEEIVRIDNNVIAAWKMLGECHRQRGNGRVNIEKCLIAWMAAAHLKPKDHELWFTCAKLSESLEFWDQADYCYNRAVSAKPPNKSELKKYIWNRSVLNKEHGSLKKAAEGFKFLLQSSPYNASILKNLAEIYIKIHAPREILKQFEIAWKYFYQYPAPPIGNDIFDLPTLNLYAELLLLDHQWSNLIRLINRGVRWFRGRKSESFWDEFDDDREWDVDERRREFPNASEEHTNKEAYLLPHLFRTKLGIARLKTGELPEAELHFSVIKNLPPDYAWGMLYDIAKAYMDIERLDLALEYFVLICNHEPAQNIGLWYNMGVCYLELKEYEHAQQCMEAILIVDNSNTNALIKLAEINELQDNRDAALEIVTNIFEQRRNINELEREQSQNEDHEKNVGSQLFVGNQKVPQDKWEKRARISRSKEEARQFTIWKTEETQRRFHKLDILRQSLKKEENVSESLNEWLAIASELIDEFVSIKAFFPSEKKARARAGLLTRRTRYASLNDQLTSMINRLNDSLTRTKYGDLDLDTILRTGYFRNVSIDAWYQLFVEFSLRLTKVGSVQQAYDVLTTAMGAILFDQDTIKRQNLRWCMLACSMYARDPQGALTPLRWVFTTFQFRQDTYRLFSAVLSQGYECSRAFVDSANQKFLLRLIKLMDQLMSNSLVSGAATLVKNDDGLATVPTSYDPVLVLLYGHIMARNRSWIPAINYYSRAFAINPDCPITNLSLGLAYLHRAMQRLSDNRHYQILQGFTFLYRYYDLRVNEGLGEKQEALYNLGKAYHFIGLEHYAVKYYEAVLGLSPMSQGDKMTSSESTVSTTYDFGFEAAYNLRLIYICSGNIKLAFQISSKYLIF.

Residues 64-91 (GLWSDEESDYEGSDDESNFSKTASRTED) are disordered. A compositionally biased stretch (acidic residues) spans 66–80 (WSDEESDYEGSDDES). TPR repeat units lie at residues 133–166 (QQML…DNNV), 205–238 (HELW…KPPN), 277–310 (ASIL…FYQY), 396–429 (HLFR…PPDY), 431–464 (WGML…EPAQ), and 466–499 (IGLW…DNSN). Positions 506 to 554 (LAEINELQDNRDAALEIVTNIFEQRRNINELEREQSQNEDHEKNVGSQL) form a coiled coil. TPR repeat units follow at residues 841-874 (PVLV…NPDC) and 924-957 (QEAL…SPMS).

In terms of assembly, component of the TFIIIC complex including sfc1, sfc3, sfc4, sfc6 and sfc7. The subunits are organized in two globular domains, tauA and tauB, connected by a proteolysis-sensitive and flexible linker. Interacts with sfc1, sfc3 and sfc6. Phosphorylated.

It localises to the nucleus. Functionally, TFIIIC mediates tRNA and 5S RNA gene activation by binding to intragenic promoter elements. Upstream of the transcription start site, TFIIIC assembles the initiation complex TFIIIB-TFIIIC-tDNA, which is sufficient for RNA polymerase III recruitment and function. Part of the tauA domain of TFIIIC that binds boxA DNA promoter sites of tRNA and similar genes. Sfc4 is the TFIIIB assembling subunit of TFIIIC. The sequence is that of Transcription factor tau subunit sfc4 from Schizosaccharomyces pombe (strain 972 / ATCC 24843) (Fission yeast).